A 155-amino-acid chain; its full sequence is MTDQIYYETMYILRPDIAEEEVKNHIDKYNKLLEEFGATILDSQMRGKRRLAYQIAKHREGIYVQLSHQGDGQHIFKIEKAMRLSEDVIRYLTVKQEGPLPTPRSSNKSSNQAEKKENENIDSANKSEPKADETDNKKKITLESSTPELEEQVKS.

Positions 94–155 (VKQEGPLPTP…TPELEEQVKS (62 aa)) are disordered. Residues 103–112 (PRSSNKSSNQ) show a composition bias toward polar residues. Residues 113–141 (AEKKENENIDSANKSEPKADETDNKKKIT) are compositionally biased toward basic and acidic residues.

Belongs to the bacterial ribosomal protein bS6 family.

Functionally, binds together with bS18 to 16S ribosomal RNA. The polypeptide is Small ribosomal subunit protein bS6 (Prochlorococcus marinus (strain MIT 9515)).